A 346-amino-acid chain; its full sequence is Protein RecA (346 aa).

79–86 (GPESSGKT) provides a ligand contact to ATP.

Belongs to the RecA family.

It is found in the cytoplasm. In terms of biological role, can catalyze the hydrolysis of ATP in the presence of single-stranded DNA, the ATP-dependent uptake of single-stranded DNA by duplex DNA, and the ATP-dependent hybridization of homologous single-stranded DNAs. It interacts with LexA causing its activation and leading to its autocatalytic cleavage. The sequence is that of Protein RecA from Chlorobaculum tepidum (strain ATCC 49652 / DSM 12025 / NBRC 103806 / TLS) (Chlorobium tepidum).